Reading from the N-terminus, the 63-residue chain is Translational regulator CsrA (63 aa).

Belongs to the CsrA/RsmA family. In terms of assembly, homodimer; the beta-strands of each monomer intercalate to form a hydrophobic core, while the alpha-helices form wings that extend away from the core.

The protein resides in the cytoplasm. A key translational regulator that binds mRNA to regulate translation initiation and/or mRNA stability. Mediates global changes in gene expression, shifting from rapid growth to stress survival by linking envelope stress, the stringent response and the catabolite repression systems. Usually binds in the 5'-UTR; binding at or near the Shine-Dalgarno sequence prevents ribosome-binding, repressing translation, binding elsewhere in the 5'-UTR can activate translation and/or stabilize the mRNA. Its function is antagonized by small RNA(s). The sequence is that of Translational regulator CsrA from Alteromonas mediterranea (strain DSM 17117 / CIP 110805 / LMG 28347 / Deep ecotype).